Consider the following 278-residue polypeptide: Protein NIF3 homolog (278 aa).

It belongs to the GTP cyclohydrolase I type 2/NIF3 family.

The sequence is that of Protein NIF3 homolog from Schizosaccharomyces pombe (strain 972 / ATCC 24843) (Fission yeast).